The primary structure comprises 302 residues: Protein KTI12 homolog (302 aa).

8-15 (GQPCSGKS) provides a ligand contact to ATP. The segment at 260-273 (LRRTFVKLMGQSSL) is calmodulin-binding.

Belongs to the KTI12 family. As to quaternary structure, interacts with the elongator complex. Binds to calmodulin in a calcium-dependent manner. As to expression, expressed in roots, hypocotyls, cotyledons, shoot apices, stems, inflorescence apices, leaves and flowers.

It localises to the cytoplasm. Its subcellular location is the nucleus. Elongator complex-associated factor that is not a structural subunit but rather transiently contacts the complex. Regulates both meristem activity and organ growth; acts as a positive regulator of adaxial leaf patterning by modulating both cell division and differentiation. Required for an early step in synthesis of 5-carbamoylmethyl (ncm5) groups present on uridines (ncm5U) at the wobble position in tRNA. The chain is Protein KTI12 homolog from Arabidopsis thaliana (Mouse-ear cress).